The chain runs to 384 residues: 4-hydroxy-3-methylbut-2-en-1-yl diphosphate synthase (flavodoxin) 1 (384 aa).

Residues cysteine 281, cysteine 284, cysteine 316, and glutamate 323 each contribute to the [4Fe-4S] cluster site.

This sequence belongs to the IspG family. The cofactor is [4Fe-4S] cluster.

It catalyses the reaction (2E)-4-hydroxy-3-methylbut-2-enyl diphosphate + oxidized [flavodoxin] + H2O + 2 H(+) = 2-C-methyl-D-erythritol 2,4-cyclic diphosphate + reduced [flavodoxin]. The protein operates within isoprenoid biosynthesis; isopentenyl diphosphate biosynthesis via DXP pathway; isopentenyl diphosphate from 1-deoxy-D-xylulose 5-phosphate: step 5/6. Its function is as follows. Converts 2C-methyl-D-erythritol 2,4-cyclodiphosphate (ME-2,4cPP) into 1-hydroxy-2-methyl-2-(E)-butenyl 4-diphosphate. This is 4-hydroxy-3-methylbut-2-en-1-yl diphosphate synthase (flavodoxin) 1 from Streptomyces coelicolor (strain ATCC BAA-471 / A3(2) / M145).